We begin with the raw amino-acid sequence, 751 residues long: Diamine oxidase [copper-containing] (751 aa).

An N-terminal signal peptide occupies residues methionine 1–alanine 19. Asparagine 110 and asparagine 168 each carry an N-linked (GlcNAc...) asparagine glycan. A disulfide bridge links cysteine 177 with cysteine 181. The active-site Proton acceptor is the aspartate 373. A disulfide bond links cysteine 391 and cysteine 417. Tyrosine 461 serves as the catalytic Schiff-base intermediate with substrate; via topaquinone. Tyrosine 461 is subject to 2',4',5'-topaquinone. Positions 510 and 512 each coordinate Cu(2+). Aspartate 519, leucine 520, and aspartate 521 together coordinate Ca(2+). Residue asparagine 538 is glycosylated (N-linked (GlcNAc...) asparagine). Glutamate 562, phenylalanine 653, asparagine 656, glutamate 658, aspartate 664, and leucine 665 together coordinate Ca(2+). Position 675 (histidine 675) interacts with Cu(2+). N-linked (GlcNAc...) asparagine glycosylation occurs at asparagine 745.

Belongs to the copper/topaquinone oxidase family. Homodimer; disulfide-linked. Requires Cu(2+) as cofactor. It depends on Ca(2+) as a cofactor. L-topaquinone is required as a cofactor. N-glycosylated. Post-translationally, topaquinone (TPQ) is generated by copper-dependent autoxidation of a specific tyrosyl residue. As to expression, widely expressed with higher expression in placenta and kidney.

The protein localises to the secreted. Its subcellular location is the extracellular space. The protein resides in the cell membrane. It carries out the reaction histamine + O2 + H2O = imidazole-4-acetaldehyde + H2O2 + NH4(+). The enzyme catalyses N(tau)-methylhistamine + O2 + H2O = 1-methylimidazole-4-acetaldehyde + H2O2 + NH4(+). The catalysed reaction is putrescine + O2 + H2O = 4-aminobutanal + H2O2 + NH4(+). It catalyses the reaction cadaverine + O2 + H2O = 5-aminopentanal + H2O2 + NH4(+). Inhibited by amiloride and amiloride analogs. Inhibited by isoniazid, cimetidine, clonidine, berenil and pentamidine. Catalyzes the oxidative deamination of primary amines to the corresponding aldehydes with the concomitant production of hydrogen peroxide and ammonia. Its preferred substrates are the diamines histamine and 1-methylhistamine and it could therefore play a role in allergic and immune responses. Has a broad specificity for diamines and can also act on cadaverine and putrescine, two products of amino acid catabolism. It could also act on polyamines, like spermidine and spermine though less efficiently, and regulate various biological processes. In Homo sapiens (Human), this protein is Diamine oxidase [copper-containing].